The sequence spans 230 residues: 3-beta-hydroxysteroid-Delta(8),Delta(7)-isomerase (230 aa).

The residue at position 2 (T2) is an N-acetylthreonine. Transmembrane regions (helical) follow at residues 29–49 (SHIL…TWLL), 66–86 (LCWF…FSLY), 121–141 (METV…IAFL), and 185–205 (FWFY…ILVL). An EXPERA domain is found at 61–204 (GRRLALCWFA…VWLVIPSILV (144 aa)).

Belongs to the EBP family.

It is found in the endoplasmic reticulum membrane. Its subcellular location is the nucleus envelope. It localises to the cytoplasmic vesicle. The enzyme catalyses lathosterol = 5alpha-cholest-8-en-3beta-ol. The catalysed reaction is zymosterol = 5alpha-cholesta-7,24-dien-3beta-ol. It carries out the reaction 5,6alpha-epoxy-5alpha-cholestan-3beta-ol + H2O = 5alpha-cholestane-3beta,5,6beta-triol. It catalyses the reaction 5,6beta-epoxy-5beta-cholestan-3beta-ol + H2O = 5alpha-cholestane-3beta,5,6beta-triol. It functions in the pathway steroid biosynthesis; cholesterol biosynthesis. Its function is as follows. Isomerase that catalyzes the conversion of Delta(8)-sterols to their corresponding Delta(7)-isomers. Component of the microsomal antiestrogen binding site (AEBS), a multiproteic complex at the ER membrane that consists of an association between EBP and 7-dehydrocholesterol reductase/DHCR7. This complex is responsible for cholesterol-5,6-epoxide hydrolase (ChEH) activity, which consists in the hydration of cholesterol-5,6-epoxides (5,6-EC) into cholestane-3beta,5alpha,6beta-triol (CT). The precise role of each component of this complex has not been described yet. The chain is 3-beta-hydroxysteroid-Delta(8),Delta(7)-isomerase from Mus musculus (Mouse).